The chain runs to 313 residues: Dimethyladenosine transferase (313 aa).

Histidine 37, leucine 39, glycine 64, glutamate 85, aspartate 113, and asparagine 128 together coordinate S-adenosyl-L-methionine.

This sequence belongs to the class I-like SAM-binding methyltransferase superfamily. rRNA adenine N(6)-methyltransferase family. As to quaternary structure, part of the small subunit (SSU) processome, composed of more than 70 proteins and the RNA chaperone small nucleolar RNA (snoRNA) U3.

Its subcellular location is the nucleus. It is found in the nucleoplasm. It localises to the nucleolus. The catalysed reaction is adenosine(1779)/adenosine(1780) in 18S rRNA + 4 S-adenosyl-L-methionine = N(6)-dimethyladenosine(1779)/N(6)-dimethyladenosine(1780) in 18S rRNA + 4 S-adenosyl-L-homocysteine + 4 H(+). In terms of biological role, specifically dimethylates two adjacent adenosines in the loop of a conserved hairpin near the 3'-end of 18S rRNA in the 40S particle. Involved in the pre-rRNA processing steps leading to small-subunit rRNA production independently of its RNA-modifying catalytic activity. Part of the small subunit (SSU) processome, first precursor of the small eukaryotic ribosomal subunit. During the assembly of the SSU processome in the nucleolus, many ribosome biogenesis factors, an RNA chaperone and ribosomal proteins associate with the nascent pre-rRNA and work in concert to generate RNA folding, modifications, rearrangements and cleavage as well as targeted degradation of pre-ribosomal RNA by the RNA exosome. This is Dimethyladenosine transferase (Dimt1) from Mus musculus (Mouse).